Reading from the N-terminus, the 47-residue chain is MAKGKRTFQPNNRRRARVHGFRLRMRTRAGRAIVAARRRKGRAKLTA.

Belongs to the bacterial ribosomal protein bL34 family.

This Corynebacterium glutamicum (strain R) protein is Large ribosomal subunit protein bL34.